The following is a 295-amino-acid chain: 4-hydroxy-tetrahydrodipicolinate synthase (295 aa).

Thr-47 serves as a coordination point for pyruvate. Tyr-135 serves as the catalytic Proton donor/acceptor. Catalysis depends on Lys-163, which acts as the Schiff-base intermediate with substrate. Residue Ile-206 participates in pyruvate binding.

Belongs to the DapA family. Homodimer.

Its subcellular location is the cytoplasm. It carries out the reaction L-aspartate 4-semialdehyde + pyruvate = (2S,4S)-4-hydroxy-2,3,4,5-tetrahydrodipicolinate + H2O + H(+). It participates in amino-acid biosynthesis; L-lysine biosynthesis via DAP pathway; (S)-tetrahydrodipicolinate from L-aspartate: step 3/4. Functionally, catalyzes the condensation of (S)-aspartate-beta-semialdehyde [(S)-ASA] and pyruvate to 4-hydroxy-tetrahydrodipicolinate (HTPA). The protein is 4-hydroxy-tetrahydrodipicolinate synthase of Staphylococcus saprophyticus subsp. saprophyticus (strain ATCC 15305 / DSM 20229 / NCIMB 8711 / NCTC 7292 / S-41).